Here is a 101-residue protein sequence, read N- to C-terminus: Small ribosomal subunit protein uS14 (101 aa).

This sequence belongs to the universal ribosomal protein uS14 family. As to quaternary structure, part of the 30S ribosomal subunit. Contacts proteins S3 and S10.

Its function is as follows. Binds 16S rRNA, required for the assembly of 30S particles and may also be responsible for determining the conformation of the 16S rRNA at the A site. The polypeptide is Small ribosomal subunit protein uS14 (Escherichia coli O139:H28 (strain E24377A / ETEC)).